A 501-amino-acid chain; its full sequence is Phosphatase and actin regulator 1 (501 aa).

The RPEL 1 repeat unit spans residues 1–18; sequence MRQSREELIKRGVLKEIF. Disordered regions lie at residues 21 to 46 and 295 to 329; these read DGELSIPNEEGALENGQPLGSGQVLS and DNKENVPHEADYEDSSCLYPRQEEEEEEDEDEDNS. The span at 36–46 shows a compositional bias: low complexity; the sequence is GQPLGSGQVLS. The segment covering 295-304 has biased composition (basic and acidic residues); the sequence is DNKENVPHEA. Positions 317 to 328 are enriched in acidic residues; sequence EEEEEEDEDEDN. RPEL repeat units lie at residues 343 to 368, 381 to 406, and 419 to 444; these read DSLAIKLSNRPSKRELEEKNILPMQT, TKLTRRLSQRPTAEELEQRNILKPRN, and RRLTRKLSQRPTVEELRERKILIRFS. The interval 382-415 is disordered; the sequence is KLTRRLSQRPTAEELEQRNILKPRNEQEEQEEKR. The segment covering 392-415 has biased composition (basic and acidic residues); that stretch reads TAEELEQRNILKPRNEQEEQEEKR.

This sequence belongs to the phosphatase and actin regulator family. As to quaternary structure, interacts (via RPEL repeats) with ACTA1. In terms of tissue distribution, expressed in the gizzard, and in neurons from central and peripheral nervous systems.

The protein resides in the cytoplasm. Its subcellular location is the synapse. It is found in the nucleus. In terms of biological role, binds actin monomers (G actin) and plays a role in the reorganization of the actin cytoskeleton and in formation of actin stress fibers. The protein is Phosphatase and actin regulator 1 (PHACTR1) of Gallus gallus (Chicken).